The sequence spans 294 residues: Flavin-dependent thymidylate synthase (294 aa).

The ThyX domain maps to 27-250; that stretch reads GFIRVIDYMG…PFTYEAFEEY (224 aa). FAD is bound by residues Thr-73, 96 to 98, and Glu-104; that span reads RHR. Residues 93–96, 104–108, and Arg-189 each bind dUMP; these read QWIR and EYSAR. The ThyX motif motif lies at 96–106; sequence RHRTASVNEYS. FAD contacts are provided by residues 205-207 and His-211; that span reads NLH. Residue Arg-216 coordinates dUMP. Arg-216 functions as the Involved in ionization of N3 of dUMP, leading to its activation in the catalytic mechanism.

It belongs to the thymidylate synthase ThyX family. In terms of assembly, homotetramer. The cofactor is FAD.

The catalysed reaction is dUMP + (6R)-5,10-methylene-5,6,7,8-tetrahydrofolate + NADPH + H(+) = dTMP + (6S)-5,6,7,8-tetrahydrofolate + NADP(+). Its pathway is pyrimidine metabolism; dTTP biosynthesis. Functionally, catalyzes the reductive methylation of 2'-deoxyuridine-5'-monophosphate (dUMP) to 2'-deoxythymidine-5'-monophosphate (dTMP) while utilizing 5,10-methylenetetrahydrofolate (mTHF) as the methyl donor, and NADPH and FADH(2) as the reductant. This Rickettsia bellii (strain RML369-C) protein is Flavin-dependent thymidylate synthase.